The chain runs to 314 residues: Secreted frizzled-related protein 1 (314 aa).

Residues 1 to 31 (MGVGRSEGGRRGAALGVLLALGVALLAVGSA) form the signal peptide. In terms of domain architecture, FZ spans 53–169 (TKPHQCVAIP…FPQDYVCIAM (117 aa)). Intrachain disulfides connect cysteine 58-cysteine 121, cysteine 68-cysteine 114, cysteine 105-cysteine 140, cysteine 129-cysteine 166, and cysteine 133-cysteine 157. Asparagine 173 carries an N-linked (GlcNAc...) asparagine glycan. Cystine bridges form between cysteine 186–cysteine 256, cysteine 189–cysteine 258, and cysteine 203–cysteine 306. In terms of domain architecture, NTR spans 186–306 (CPPCDNEMKS…FMKKVKAPDC (121 aa)).

This sequence belongs to the secreted frizzled-related protein (sFRP) family.

It is found in the secreted. Its function is as follows. Soluble frizzled-related proteins (sFRPS) function as modulators of Wnt signaling through direct interaction with Wnts. They have a role in regulating cell growth and differentiation in specific cell types. The sequence is that of Secreted frizzled-related protein 1 (SFRP1) from Gallus gallus (Chicken).